The chain runs to 1456 residues: MAKVREVYQSFTDSTTKTLIQDEAYRNIRPIMEKHKLANPYAQTVEAANDLEGFGIATNPYSIELHTHAAAKTIENKLLEVLGSILPQEPVTFMFLKPRKLNYMRRNPRIKDIFHNVAIEPRDVARYPKETIIDKLTEITTDTAYIGDTLHFLDPSYIVETFQNCPKLQTLYATLVLPVEAAFKMESTHPNIYSLKYFGDGFQYIPGNHGGGAYHHEFSHLQWLKVGKIKWRDPKDSFLGHLNYTTEQVEMHTVTVQLQESFAANHLYCIRRGDLLTPEVRTFGQPDRYVIPPQIFLPKVHNCKKPILKKTMMQLFLYVRTVKVAKNCDIFAKVRQLIKSSDLDKYSAVELVYLVSYMEFLADLQATTCFSDTLSGGLLTKTLAPVRAWIQEKKMQLFGLEDYAKLVKAVDFHPVDFSFKVETWDFRFHPLQAWKAFRPREVSDVEEMENLFSDGDLLDCFTRMPAYAVNAEEDLAAIRKTPEMDAGQEVKEPAGDRNQYSNPAETFLSKLHRKHSREVKHQAAKKAKRLAEIQESMRAEGEAESNEMSGGMGAIPSNAELPSTSGARQELTLPTTKPVPARWEDASFTDSSVEEEQVKLPGKEAVETATQQVIEGLPWKHWIPQLNAVGFKALEIQRDRSGTMIMPITEMVSGLEKEDFPEGTPKELARELLAMNRSPATIPLDLLRARDYGSDVKNKRIGAITKTQAASWGEYLTGKIESLTERKVAACVIHGAGGSGKSHAIQKALREIGKGSDITVVLPTNELRLDWSKKVPNTEPYMFKTYEKALIGGTGSIVIFDDYSKLPPGYIEALICFYSKIKLVILTGDSRQSVYHETAEDASIRHLGPATEYFSKYCRYYLNATHRNKKDLANMLGVYSERTGVTEISMSAEFLEGIPTLVPSDEKRRLYMGTGRNDTFTYAGCQGLTKPKVQIVLDHNTQVCSANVMYTALSRATDRIHFVNTSANSSAFWEKLDSTPYLKTFLSVVREQALKEYEPAEAEPIREPEPQTHMCVENEESVLEEYKEELLEKFDREIHSESHGHSNCVQTEDTTIQLFSHQQAKDETLLWATIDARLKTSNQETNFREFLSKKDIGDVLFLNYQKAMGLPKERIPFSQEVWEACAHEVQSKYLSKSKCNLINGTVRQSPDFDENKIMVFLKSQWVTKVEKLGLPKIKPGQTIAAFYQQTVMLFGTMARYMRWFRQAFQPKEVFINCETTPEDMSAWALNNWNFSRPSLANDYTAFDQSQDGAMLQFEVLKAKHHCIPEEIIQAYIDIKTNAHIFLGTLSIMRLTGEGPTFDANTECNIAYTHTKFDIPAGTAQVYAGDDSALDCVPEVKHSFHRLEDKLLLKSKPVITQQKKGSWPEFCGWLITPKGVMKDPIKLHVSLKLAEAKGELKKCQDSYEIDLSYAYDHKDSLHDLFDEKQCQAHTLTCRTLIKSGRGTVSLPRLRNFL.

Positions 59 to 224 (NPYSIELHTH…HHEFSHLQWL (166 aa)) constitute an Alphavirus-like MT domain. A disordered region spans residues 537–573 (MRAEGEAESNEMSGGMGAIPSNAELPSTSGARQELTL). A compositionally biased stretch (polar residues) spans 560–573 (ELPSTSGARQELTL). Residues 695-862 (DVKNKRIGAI…YFSKYCRYYL (168 aa)) enclose the (+)RNA virus helicase ATP-binding domain. 735 to 742 (GAGGSGKS) provides a ligand contact to ATP. A (+)RNA virus helicase C-terminal domain is found at 863–997 (NATHRNKKDL…VVREQALKEY (135 aa)). Residues 1236–1343 (RPSLANDYTA…DCVPEVKHSF (108 aa)) enclose the RdRp catalytic domain.

This sequence belongs to the potexvirus/carlavirus RNA replication protein family.

It carries out the reaction RNA(n) + a ribonucleoside 5'-triphosphate = RNA(n+1) + diphosphate. The catalysed reaction is ATP + H2O = ADP + phosphate + H(+). RNA replication. The central part of this protein possibly functions as an ATP-binding helicase. In Potato virus X (PVX), this protein is RNA replication protein.